The primary structure comprises 422 residues: Carboxypeptidase B2 (422 aa).

The N-terminal stretch at 1–21 (MKLYGLGVLVAIILYEKHGLA) is a signal peptide. Positions 22–113 (FQSGHVLSAL…QTSNDTVSPR (92 aa)) are cleaved as a propeptide — activation peptide. 4 N-linked (GlcNAc...) asparagine glycosylation sites follow: Asn43, Asn72, Asn84, and Asn107. Positions 121-418 (QYHSLNEIYS…AAVSKIAWHV (298 aa)) constitute a Peptidase M14 domain. The cysteines at positions 177 and 190 are disulfide-linked. Zn(2+) is bound by residues His180 and Glu183. Substrate is bound by residues 180 to 183 (HARE) and Arg238. Residue Asn240 is glycosylated (N-linked (GlcNAc...) asparagine). 2 cysteine pairs are disulfide-bonded: Cys249-Cys273 and Cys264-Cys278. Residue 255–256 (NR) coordinates substrate. His309 contributes to the Zn(2+) binding site. 310-311 (SY) contacts substrate. Asn322 carries N-linked (GlcNAc...) asparagine glycosylation. Tyr362 is a binding site for substrate. Glu384 acts as the Proton donor/acceptor in catalysis.

It belongs to the peptidase M14 family. Requires Zn(2+) as cofactor. In terms of tissue distribution, plasma; synthesized in the liver.

It localises to the secreted. The enzyme catalyses Release of C-terminal Arg and Lys from a polypeptide.. TAFI/CPB2 is unique among carboxypeptidases in that it spontaneously inactivates with a short half-life, a property that is crucial for its role in controlling blood clot lysis. The zymogen is stabilized by interactions with the activation peptide. Release of the activation peptide increases a dynamic flap mobility and in time this leads to conformational changes that disrupt the catalytic site and expose a cryptic thrombin-cleavage site present at Arg-323. Its function is as follows. Cleaves C-terminal arginine or lysine residues from biologically active peptides such as kinins or anaphylatoxins in the circulation thereby regulating their activities. Down-regulates fibrinolysis by removing C-terminal lysine residues from fibrin that has already been partially degraded by plasmin. The protein is Carboxypeptidase B2 (Cpb2) of Rattus norvegicus (Rat).